Consider the following 277-residue polypeptide: Putative ankyrin repeat protein L81 (277 aa).

2 ANK repeats span residues F150–Q179 and Q183–Q215.

The polypeptide is Putative ankyrin repeat protein L81 (Acanthamoeba polyphaga (Amoeba)).